Reading from the N-terminus, the 305-residue chain is Glycine--tRNA ligase alpha subunit (305 aa).

It belongs to the class-II aminoacyl-tRNA synthetase family. In terms of assembly, tetramer of two alpha and two beta subunits.

It is found in the cytoplasm. It catalyses the reaction tRNA(Gly) + glycine + ATP = glycyl-tRNA(Gly) + AMP + diphosphate. In Heliobacterium modesticaldum (strain ATCC 51547 / Ice1), this protein is Glycine--tRNA ligase alpha subunit.